The sequence spans 508 residues: Aspartic proteinase yapsin-3 (508 aa).

An N-terminal signal peptide occupies residues 1–20 (MKLQLAAVATLAVLTSPAFG). The propeptide occupies 21 to 47 (RVLPDGKYVKIPFTKKKNGDNGELSKR). The 332-residue stretch at 63–394 (YSVELAIGTP…DLDNYEISLA (332 aa)) folds into the Peptidase A1 domain. N-linked (GlcNAc...) asparagine glycosylation occurs at asparagine 75. Aspartate 81 is a catalytic residue. N-linked (GlcNAc...) asparagine glycans are attached at residues asparagine 120, asparagine 160, asparagine 163, and asparagine 275. Aspartate 288 is a catalytic residue. Asparagine 309, asparagine 328, asparagine 367, asparagine 422, asparagine 445, and asparagine 462 each carry an N-linked (GlcNAc...) asparagine glycan. Low complexity predominate over residues 448 to 468 (STATTTRSTTTKKTNSTTTAK). Residues 448-476 (STATTTRSTTTKKTNSTTTAKSTHKSKRA) form a disordered region. Asparagine 483 carries the GPI-anchor amidated asparagine lipid modification. The propeptide at 484–508 (SASSIRSTLGLLLVPSLLILSVFFS) is removed in mature form.

This sequence belongs to the peptidase A1 family. Can also be processed to start at Phe-54.

It localises to the cell membrane. Its function is as follows. Cleaves proteins C-terminally to mono- and paired-basic residues. Required for cell wall integrity. The chain is Aspartic proteinase yapsin-3 (YPS3) from Saccharomyces cerevisiae (strain ATCC 204508 / S288c) (Baker's yeast).